The sequence spans 265 residues: Protein Msed_2121 (265 aa).

The protein belongs to the CinA family.

This Metallosphaera sedula (strain ATCC 51363 / DSM 5348 / JCM 9185 / NBRC 15509 / TH2) protein is Protein Msed_2121.